A 315-amino-acid chain; its full sequence is PDZ domain-containing protein GIPC2 (315 aa).

Residues 1 to 12 (MPLKLRGKKKAK) show a composition bias toward basic residues. The segment at 1–34 (MPLKLRGKKKAKSKETAGLVEGEPTGAGGGSLSA) is disordered. Residues 117-197 (EVNVYKSEDS…EELFTMKLIE (81 aa)) form the PDZ domain.

It belongs to the GIPC family. As to quaternary structure, probably interacts with SEMA5A. As to expression, expressed at highest levels in ascending colon and at moderate levels in adult kidney. Expressed at low levels in adult pancreas and at very low levels in adult liver. Expression is down-regulated in several primary tumors, such as kidney, colon and rectal tumors.

It localises to the cytoplasm. The chain is PDZ domain-containing protein GIPC2 (GIPC2) from Homo sapiens (Human).